The chain runs to 309 residues: uncharacterized protein (309 aa).

The helical transmembrane segment at 23-43 (ALVLSSIVNILLLLLIYSTVF) threads the bilayer.

It belongs to the chlamydial CPn_0593/CT_474/TC_0759 family.

The protein localises to the membrane. This is an uncharacterized protein from Chlamydia trachomatis serovar D (strain ATCC VR-885 / DSM 19411 / UW-3/Cx).